Reading from the N-terminus, the 677-residue chain is Testis-specific Y-encoded-like protein 2 (677 aa).

The disordered stretch occupies residues 1-54 (MDRPDEGPPAKTPRLSSSEPRQRDLPPPPPPPLQRLPLPPPQQRPRPQEETEAA). Residue K11 forms a Glycyl lysine isopeptide (Lys-Gly) (interchain with G-Cter in SUMO2) linkage. A Phosphoserine modification is found at S18. The segment covering 25-44 (LPPPPPPPLQRLPLPPPQQR) has biased composition (pro residues). Glycyl lysine isopeptide (Lys-Gly) (interchain with G-Cter in SUMO2) cross-links involve residues K158 and K160. The tract at residues 175-202 (KESVRRRQRRRRRRRKQRKAKESRERSA) is disordered. Over residues 178 to 193 (VRRRQRRRRRRRKQRK) the composition is skewed to basic residues. T333 carries the phosphothreonine modification. Residues 469–658 (ANENLCDSEN…EVNSEDSDIQ (190 aa)) form a disordered region. The span at 484 to 493 (GYNTKITDNK) shows a compositional bias: polar residues. Over residues 509-525 (EKNTYDSEDSNSEKADG) the composition is skewed to basic and acidic residues. Residues 526 to 540 (DNTTLRDNQQVTNIQ) are compositionally biased toward polar residues. Composition is skewed to acidic residues over residues 543–581 (SDSD…DDDD) and 606–627 (DYEE…ETSE). Residues 639 to 650 (DERIYGEERSEV) show a composition bias toward basic and acidic residues. 3 positions are modified to phosphoserine: S648, S652, and S655.

The protein belongs to the nucleosome assembly protein (NAP) family. In terms of assembly, interacts with histones. Interacts with CASK. Part of a complex containing CASK, TBR1 and TSPYL2. In terms of processing, phosphorylation at Thr-333 impairs function on cell proliferation. In terms of tissue distribution, present at high levels in the pituitary gland and at moderate levels in adrenal gland, brain, testis and ovary. In brain, expressed both in mature neurons and progenitor cells (at protein level).

The protein localises to the nucleus. It localises to the cytoplasm. Part of the CASK/TBR1/TSPYL2 transcriptional complex which modulates gene expression in response to neuronal synaptic activity, probably by facilitating nucleosome assembly. May inhibit cell proliferation by inducing p53-dependent CDKN1A expression. This is Testis-specific Y-encoded-like protein 2 (Tspyl2) from Mus musculus (Mouse).